The chain runs to 469 residues: Glutamate--tRNA ligase (469 aa).

Positions 10–20 (PSPTGYLHVGG) match the 'HIGH' region motif. The Zn(2+) site is built by Cys-99, Cys-101, Cys-126, and Asp-128. The short motif at 238–242 (RLSKR) is the 'KMSKS' region element. Residue Lys-241 participates in ATP binding.

Belongs to the class-I aminoacyl-tRNA synthetase family. Glutamate--tRNA ligase type 1 subfamily. In terms of assembly, monomer. Zn(2+) serves as cofactor.

It localises to the cytoplasm. It carries out the reaction tRNA(Glu) + L-glutamate + ATP = L-glutamyl-tRNA(Glu) + AMP + diphosphate. In terms of biological role, catalyzes the attachment of glutamate to tRNA(Glu) in a two-step reaction: glutamate is first activated by ATP to form Glu-AMP and then transferred to the acceptor end of tRNA(Glu). This is Glutamate--tRNA ligase from Pelobacter propionicus (strain DSM 2379 / NBRC 103807 / OttBd1).